Here is a 906-residue protein sequence, read N- to C-terminus: uncharacterized protein (906 aa).

Disordered regions lie at residues 231–322 (KEDA…PSTI) and 865–906 (AGAY…DEDE). Residues 236 to 250 (TTKQTTTTTTTTPQT) are compositionally biased toward low complexity. Over residues 264 to 281 (TPTPAPAPKPTTPKPTPA) the composition is skewed to pro residues. The segment covering 302-314 (SVNNIPTPSDTNE) has biased composition (polar residues). Residues 867-906 (AYEDDDDDEGEGNEDDEDNDENEDEDEGEGEGDSSEDEDE) show a composition bias toward acidic residues.

This is an uncharacterized protein from Dictyostelium sp. (strain GA11) (Slime mold).